The sequence spans 236 residues: Small ribosomal subunit protein uS2c (236 aa).

This sequence belongs to the universal ribosomal protein uS2 family.

The protein localises to the plastid. Its subcellular location is the chloroplast. The chain is Small ribosomal subunit protein uS2c (rps2) from Lolium perenne (Perennial ryegrass).